We begin with the raw amino-acid sequence, 211 residues long: Bacteriorhodopsin (211 aa).

Residues 1–19 (IWLWLGTAGMFLGMLYFIA) form a helical membrane-spanning segment. The Cytoplasmic portion of the chain corresponds to 20 to 33 (RGWGETDSRRQKFY). Residues 34 to 52 (IATILITAIAFVNYLAMAL) form a helical membrane-spanning segment. The Extracellular portion of the chain corresponds to 53–68 (GFGLTIVEFAGEEHPI). A helical transmembrane segment spans residues 69-86 (YWARYSDWLFTTPLLLYD). Residues 87 to 97 (LGLLAGADRNT) lie on the Cytoplasmic side of the membrane. A helical transmembrane segment spans residues 98 to 117 (ITSLVSLDVLMIGTGLVATL). At 118 to 130 (SAGSGVLSAGAER) the chain is on the extracellular side. The chain crosses the membrane as a helical span at residues 131–150 (LVWWGISTAFLLVLLYFLFS). Residues 151 to 168 (SLSGRVADLPSDTRSTFK) are Cytoplasmic-facing. The helical transmembrane segment at 169-187 (TLRNLVTVVWLVYPVWWLI) threads the bilayer. Residues 188 to 199 (GTEGIGLVGIGI) lie on the Extracellular side of the membrane. The chain crosses the membrane as a helical span at residues 200–211 (ETAGFMVIDLTA).

It belongs to the archaeal/bacterial/fungal opsin family.

The protein localises to the cell membrane. Functionally, light-driven proton pump. The sequence is that of Bacteriorhodopsin (bop) from Halobacterium halobium (strain port).